We begin with the raw amino-acid sequence, 711 residues long: Polyribonucleotide nucleotidyltransferase (711 aa).

Positions 486 and 492 each coordinate Mg(2+). Residues 553–612 form the KH domain; it reads PRIHTIKINPDKIKDVIGKGGSVIRALTEETGTTIEIEDDGTVKIAATDGEKAKHAIRRI. Positions 622 to 690 constitute an S1 motif domain; that stretch reads GRVYNGKVTR…RQGRIRLSIK (69 aa). The disordered stretch occupies residues 689–711; the sequence is IKEATEQSQPAAAPEAPAAEQGE. Residues 694–711 show a composition bias toward low complexity; the sequence is EQSQPAAAPEAPAAEQGE.

This sequence belongs to the polyribonucleotide nucleotidyltransferase family. Component of the RNA degradosome, which is a multiprotein complex involved in RNA processing and mRNA degradation. It depends on Mg(2+) as a cofactor.

It is found in the cytoplasm. It catalyses the reaction RNA(n+1) + phosphate = RNA(n) + a ribonucleoside 5'-diphosphate. In terms of biological role, involved in mRNA degradation. Catalyzes the phosphorolysis of single-stranded polyribonucleotides processively in the 3'- to 5'-direction. The sequence is that of Polyribonucleotide nucleotidyltransferase from Escherichia coli O6:K15:H31 (strain 536 / UPEC).